Reading from the N-terminus, the 513-residue chain is MAGGAMTDTDGAHKNYPGKMTIFVFLACLVASSGGLIFGYDIGISGGVTSMDSFLIKFFPSVYAKEKEMVETNQYCKFDSELLTLFTSSLYLAALIASLFASVITRKFGRRITMLGGGVIFLVGAILNGAAADVAMLIIGRILLGIGVGFSNQAVPLYLSEMAPARMRGMLNISFQLMITVGILAANLINYFTDKIAGGWGWRVSLGLAAVPAVIMAGGSLFLPDTPNSLLSRGKENEARAMLRRIRGTDDVGPEYDDLVAASEASKAIENPWRTLLERRYRPQLVMSVLIPTLQQLTGINVVMFYAPVLFKTIGFGGTASLMSAVITGLVNMFATFVSIATVDRLGRRKLLLQGGVQMIFAQFILGTLIAVKFGTAGVANISRGYAIVVVLCICVFVSAFAWSWGPLGWLVPSEIFPLEIRSAAQSVVVVFNMAFTFIIAQIFLMMLCHLKFGLFYFFGAMELIMTGFVFFFLPETKGIPIEEMDRIWGKHWYWRRFVGAGAGGKVEITSTV.

Residues M1–P17 are Cytoplasmic-facing. A helical membrane pass occupies residues G18–F38. Topologically, residues G39–E81 are extracellular. A helical membrane pass occupies residues L82–S102. The Cytoplasmic portion of the chain corresponds to V103 to G116. Residues G117–L137 form a helical membrane-spanning segment. Residues I138–I139 are Extracellular-facing. A helical transmembrane segment spans residues G140–S160. Over E161–R166 the chain is Cytoplasmic. A helical transmembrane segment spans residues M167–N187. The Extracellular segment spans residues L188–G201. A helical transmembrane segment spans residues W202–F222. Residues L223–L294 are Cytoplasmic-facing. A helical membrane pass occupies residues Q295–G315. Topologically, residues F316–A320 are extracellular. The helical transmembrane segment at S321–A341 threads the bilayer. The Cytoplasmic segment spans residues T342–G347. A helical transmembrane segment spans residues R348 to T368. The Extracellular segment spans residues L369 to G385. A helical transmembrane segment spans residues Y386–G406. Residues P407–A425 are Cytoplasmic-facing. The chain crosses the membrane as a helical span at residues Q426–M446. Residues M447–H450 are Extracellular-facing. The helical transmembrane segment at L451–F471 threads the bilayer. Residues F472–T512 lie on the Cytoplasmic side of the membrane.

The protein belongs to the major facilitator superfamily. Sugar transporter (TC 2.A.1.1) family. As to expression, expressed specifically in anthers.

The protein localises to the membrane. Mediates active uptake of hexoses by sugar:proton symport. May play an important role in transporting monosaccharides during anther development. The protein is Sugar transport protein MST8 of Oryza sativa subsp. japonica (Rice).